A 299-amino-acid chain; its full sequence is Zinc finger protein-like 1 homolog (299 aa).

A B box-type; degenerate zinc finger spans residues 1–43; sequence MGLCKCPKRLVTNQFCFEHRVNVCEHCMVQSHPKCIVQSYLQW. Residues 53-101 form an RING-type; atypical zinc finger; the sequence is CTLCGTTLEQGDCVRLVCYHVFHWDCLNARQAALPANTAPRGHQCPACS. The segment at 200–231 is disordered; that stretch reads AGDYASSRRPLLPRQSPIGGTDRDDNKYQRRT. A Phosphoserine modification is found at Ser-215. The chain crosses the membrane as a helical span at residues 256-276; sequence WFLVTAGILAFVLFVYLMAWL.

Belongs to the ZFPL1 family.

Its subcellular location is the membrane. The polypeptide is Zinc finger protein-like 1 homolog (Drosophila melanogaster (Fruit fly)).